The following is a 256-amino-acid chain: H-2 class II histocompatibility antigen, A-B alpha chain (256 aa).

The N-terminal stretch at 1–23 is a signal peptide; it reads MPRSRALILGVLALTTMLSLCGG. The alpha-1 stretch occupies residues 24-111; sequence EDDIEADHVG…KRSNSTPATN (88 aa). Residues 24 to 218 are Extracellular-facing; the sequence is EDDIEADHVG…IPAPMSELTE (195 aa). Residues 112-205 form an alpha-2 region; the sequence is EAPQATVFPK…GLEEPVLKHW (94 aa). In terms of domain architecture, Ig-like C1-type spans 114–206; it reads PQATVFPKSP…LEEPVLKHWE (93 aa). Cys134 and Cys190 are joined by a disulfide. An N-linked (GlcNAc...) asparagine glycan is attached at Asn145. The tract at residues 206–218 is connecting peptide; it reads EPEIPAPMSELTE. A helical transmembrane segment spans residues 219–244; that stretch reads TVVCALGLSVGLVGIVVGTIFIIQGL. At 245–256 the chain is on the cytoplasmic side; that stretch reads RSGGTSRHPGPL.

Belongs to the MHC class II family.

Its subcellular location is the membrane. This Mus musculus (Mouse) protein is H-2 class II histocompatibility antigen, A-B alpha chain (H2-Aa).